The primary structure comprises 318 residues: Protein OPG137 (318 aa).

A coiled-coil region spans residues 145 to 172; that stretch reads VYDKDKRIQMLEDEVVNLRNQRSNTKSS.

Belongs to the orthopoxvirus OPG137 family. As to quaternary structure, homomultimer. Interacts with OPG160. Phosphorylated by a OPG054-independent mechanism.

The protein resides in the host cytoplasm. Its function is as follows. Required for viral crescent formation early during virus morphogenesis. This is Protein OPG137 (OPG137) from Vaccinia virus (strain Ankara) (VACV).